The primary structure comprises 344 residues: Protease HtpX homolog (344 aa).

The next 3 helical transmembrane spans lie at 8 to 28, 46 to 66, and 74 to 94; these read VALG…ATVA, ALTG…FVLV, and VSFL…TYVA. H172 contacts Zn(2+). The active site involves E173. H176 lines the Zn(2+) pocket. A run of 2 helical transmembrane segments spans residues 183–203 and 220–240; these read AIML…VTAV and LAVG…VLAF. Position 245 (E245) interacts with Zn(2+).

The protein belongs to the peptidase M48B family. Zn(2+) is required as a cofactor.

The protein resides in the cell membrane. The protein is Protease HtpX homolog of Pyrobaculum calidifontis (strain DSM 21063 / JCM 11548 / VA1).